The sequence spans 235 residues: Ubiquinone/menaquinone biosynthesis C-methyltransferase UbiE (235 aa).

S-adenosyl-L-methionine-binding residues include T60, D81, and S126.

Belongs to the class I-like SAM-binding methyltransferase superfamily. MenG/UbiE family.

The enzyme catalyses a 2-demethylmenaquinol + S-adenosyl-L-methionine = a menaquinol + S-adenosyl-L-homocysteine + H(+). It carries out the reaction a 2-methoxy-6-(all-trans-polyprenyl)benzene-1,4-diol + S-adenosyl-L-methionine = a 5-methoxy-2-methyl-3-(all-trans-polyprenyl)benzene-1,4-diol + S-adenosyl-L-homocysteine + H(+). It participates in quinol/quinone metabolism; menaquinone biosynthesis; menaquinol from 1,4-dihydroxy-2-naphthoate: step 2/2. It functions in the pathway cofactor biosynthesis; ubiquinone biosynthesis. Functionally, methyltransferase required for the conversion of demethylmenaquinol (DMKH2) to menaquinol (MKH2) and the conversion of 2-polyprenyl-6-methoxy-1,4-benzoquinol (DDMQH2) to 2-polyprenyl-3-methyl-6-methoxy-1,4-benzoquinol (DMQH2). This chain is Ubiquinone/menaquinone biosynthesis C-methyltransferase UbiE, found in Citrifermentans bemidjiense (strain ATCC BAA-1014 / DSM 16622 / JCM 12645 / Bem) (Geobacter bemidjiensis).